Here is a 714-residue protein sequence, read N- to C-terminus: Zinc finger matrin-type protein 1 (714 aa).

A Matrin-type 1 zinc finger spans residues 89-119 (NFCKPCGVVLQHESERISHFESEIHAQNVKF). Residues 172 to 214 (HYVGKSHSPTQNQSLEEHDQVSPSTCSPKMDEPNTTPAPPPFL) form a disordered region. Residues 230–254 (YVCHICSITFTSLHMFRSHMQGTEH) form a Matrin-type 2 zinc finger. Residues 417-434 (RERVDSEHRQRPCEERFS) are compositionally biased toward basic and acidic residues. Disordered stretches follow at residues 417–469 (RERV…NDDF) and 571–714 (MPAS…ILGF). Composition is skewed to polar residues over residues 437–446 (APQTYQQEYS) and 575–588 (LSLS…SSYN). Residues 609-619 (SHRRRRQKRKR) show a composition bias toward basic residues. Basic and acidic residues-rich tracts occupy residues 620-632 (HLEE…EKEQ) and 640-662 (SYQD…EDKA). A compositionally biased stretch (basic residues) spans 669–678 (TKHRRKKRKH).

Its subcellular location is the nucleus. The polypeptide is Zinc finger matrin-type protein 1 (Zmat1) (Mus musculus (Mouse)).